The primary structure comprises 125 residues: Large ribosomal subunit protein bL12 (125 aa).

Belongs to the bacterial ribosomal protein bL12 family. As to quaternary structure, homodimer. Part of the ribosomal stalk of the 50S ribosomal subunit. Forms a multimeric L10(L12)X complex, where L10 forms an elongated spine to which 2 to 4 L12 dimers bind in a sequential fashion. Binds GTP-bound translation factors.

Its function is as follows. Forms part of the ribosomal stalk which helps the ribosome interact with GTP-bound translation factors. Is thus essential for accurate translation. This Campylobacter concisus (strain 13826) protein is Large ribosomal subunit protein bL12.